Reading from the N-terminus, the 183-residue chain is Segregation and condensation protein B (183 aa).

This sequence belongs to the ScpB family. In terms of assembly, homodimer. Homodimerization may be required to stabilize the binding of ScpA to the Smc head domains. Component of a cohesin-like complex composed of ScpA, ScpB and the Smc homodimer, in which ScpA and ScpB bind to the head domain of Smc. The presence of the three proteins is required for the association of the complex with DNA.

The protein localises to the cytoplasm. Functionally, participates in chromosomal partition during cell division. May act via the formation of a condensin-like complex containing Smc and ScpA that pull DNA away from mid-cell into both cell halves. In Streptococcus pyogenes serotype M1, this protein is Segregation and condensation protein B.